The chain runs to 211 residues: Histidine biosynthesis bifunctional protein HisIE (211 aa).

The tract at residues 1 to 117 (MSTQTNTKSD…CWLDGNAHPF (117 aa)) is phosphoribosyl-AMP cyclohydrolase. The interval 118 to 211 (LNNLAELIAS…LARHQKAQRK (94 aa)) is phosphoribosyl-ATP pyrophosphohydrolase.

The protein in the N-terminal section; belongs to the PRA-CH family. This sequence in the C-terminal section; belongs to the PRA-PH family.

The protein localises to the cytoplasm. The catalysed reaction is 1-(5-phospho-beta-D-ribosyl)-ATP + H2O = 1-(5-phospho-beta-D-ribosyl)-5'-AMP + diphosphate + H(+). The enzyme catalyses 1-(5-phospho-beta-D-ribosyl)-5'-AMP + H2O = 1-(5-phospho-beta-D-ribosyl)-5-[(5-phospho-beta-D-ribosylamino)methylideneamino]imidazole-4-carboxamide. It participates in amino-acid biosynthesis; L-histidine biosynthesis; L-histidine from 5-phospho-alpha-D-ribose 1-diphosphate: step 2/9. Its pathway is amino-acid biosynthesis; L-histidine biosynthesis; L-histidine from 5-phospho-alpha-D-ribose 1-diphosphate: step 3/9. In Shewanella oneidensis (strain ATCC 700550 / JCM 31522 / CIP 106686 / LMG 19005 / NCIMB 14063 / MR-1), this protein is Histidine biosynthesis bifunctional protein HisIE.